A 97-amino-acid chain; its full sequence is Aspartyl/glutamyl-tRNA(Asn/Gln) amidotransferase subunit C (97 aa).

This sequence belongs to the GatC family. In terms of assembly, heterotrimer of A, B and C subunits.

It carries out the reaction L-glutamyl-tRNA(Gln) + L-glutamine + ATP + H2O = L-glutaminyl-tRNA(Gln) + L-glutamate + ADP + phosphate + H(+). The enzyme catalyses L-aspartyl-tRNA(Asn) + L-glutamine + ATP + H2O = L-asparaginyl-tRNA(Asn) + L-glutamate + ADP + phosphate + 2 H(+). In terms of biological role, allows the formation of correctly charged Asn-tRNA(Asn) or Gln-tRNA(Gln) through the transamidation of misacylated Asp-tRNA(Asn) or Glu-tRNA(Gln) in organisms which lack either or both of asparaginyl-tRNA or glutaminyl-tRNA synthetases. The reaction takes place in the presence of glutamine and ATP through an activated phospho-Asp-tRNA(Asn) or phospho-Glu-tRNA(Gln). The polypeptide is Aspartyl/glutamyl-tRNA(Asn/Gln) amidotransferase subunit C (Synechococcus sp. (strain CC9605)).